Consider the following 42-residue polypeptide: uncharacterized protein (42 aa).

It is found in the cytoplasm. This is an uncharacterized protein from Escherichia coli (strain K12).